Here is a 124-residue protein sequence, read N- to C-terminus: Holo-[acyl-carrier-protein] synthase (124 aa).

Residues Asp-8 and Glu-56 each contribute to the Mg(2+) site.

Belongs to the P-Pant transferase superfamily. AcpS family. The cofactor is Mg(2+).

The protein localises to the cytoplasm. It catalyses the reaction apo-[ACP] + CoA = holo-[ACP] + adenosine 3',5'-bisphosphate + H(+). In terms of biological role, transfers the 4'-phosphopantetheine moiety from coenzyme A to a Ser of acyl-carrier-protein. This chain is Holo-[acyl-carrier-protein] synthase, found in Clostridium acetobutylicum (strain ATCC 824 / DSM 792 / JCM 1419 / IAM 19013 / LMG 5710 / NBRC 13948 / NRRL B-527 / VKM B-1787 / 2291 / W).